The following is a 72-amino-acid chain: ATP synthase subunit c (72 aa).

2 helical membrane passes run L5–A25 and A51–V71.

This sequence belongs to the ATPase C chain family. As to quaternary structure, F-type ATPases have 2 components, F(1) - the catalytic core - and F(0) - the membrane proton channel. F(1) has five subunits: alpha(3), beta(3), gamma(1), delta(1), epsilon(1). F(0) has three main subunits: a(1), b(2) and c(10-14). The alpha and beta chains form an alternating ring which encloses part of the gamma chain. F(1) is attached to F(0) by a central stalk formed by the gamma and epsilon chains, while a peripheral stalk is formed by the delta and b chains.

It is found in the cell membrane. Its function is as follows. F(1)F(0) ATP synthase produces ATP from ADP in the presence of a proton or sodium gradient. F-type ATPases consist of two structural domains, F(1) containing the extramembraneous catalytic core and F(0) containing the membrane proton channel, linked together by a central stalk and a peripheral stalk. During catalysis, ATP synthesis in the catalytic domain of F(1) is coupled via a rotary mechanism of the central stalk subunits to proton translocation. Key component of the F(0) channel; it plays a direct role in translocation across the membrane. A homomeric c-ring of between 10-14 subunits forms the central stalk rotor element with the F(1) delta and epsilon subunits. This Clostridium perfringens (strain ATCC 13124 / DSM 756 / JCM 1290 / NCIMB 6125 / NCTC 8237 / Type A) protein is ATP synthase subunit c.